The sequence spans 173 residues: Co-chaperone protein HscB homolog (173 aa).

The 73-residue stretch at 3–75 folds into the J domain; the sequence is NPFALFDLPI…ILRADCIIAL (73 aa).

It belongs to the HscB family. As to quaternary structure, interacts with HscA and stimulates its ATPase activity.

In terms of biological role, co-chaperone involved in the maturation of iron-sulfur cluster-containing proteins. Seems to help targeting proteins to be folded toward HscA. The protein is Co-chaperone protein HscB homolog of Mannheimia succiniciproducens (strain KCTC 0769BP / MBEL55E).